A 526-amino-acid polypeptide reads, in one-letter code: Peptide chain release factor 3 (526 aa).

One can recognise a tr-type G domain in the interval 11-277 (SKRRTFAIIS…SLIKWAPSPL (267 aa)). Residues 20 to 27 (SHPDAGKT), 88 to 92 (DTPGH), and 142 to 145 (NKLD) contribute to the GTP site.

The protein belongs to the TRAFAC class translation factor GTPase superfamily. Classic translation factor GTPase family. PrfC subfamily.

The protein localises to the cytoplasm. Its function is as follows. Increases the formation of ribosomal termination complexes and stimulates activities of RF-1 and RF-2. It binds guanine nucleotides and has strong preference for UGA stop codons. It may interact directly with the ribosome. The stimulation of RF-1 and RF-2 is significantly reduced by GTP and GDP, but not by GMP. The protein is Peptide chain release factor 3 of Buchnera aphidicola subsp. Acyrthosiphon pisum (strain Tuc7).